The chain runs to 456 residues: Imidazolonepropionase (456 aa).

H104 and H106 together coordinate Fe(3+). H104 and H106 together coordinate Zn(2+). 4-imidazolone-5-propanoate is bound by residues R113, Y176, and H209. Y176 contacts N-formimidoyl-L-glutamate. Residue H274 participates in Fe(3+) binding. H274 is a Zn(2+) binding site. Position 277 (Q277) interacts with 4-imidazolone-5-propanoate. Fe(3+) is bound at residue D349. Zn(2+) is bound at residue D349. 2 residues coordinate N-formimidoyl-L-glutamate: N351 and G353. S354 is a binding site for 4-imidazolone-5-propanoate.

It belongs to the metallo-dependent hydrolases superfamily. HutI family. Zn(2+) serves as cofactor. Fe(3+) is required as a cofactor.

It is found in the cytoplasm. The catalysed reaction is 4-imidazolone-5-propanoate + H2O = N-formimidoyl-L-glutamate. The protein operates within amino-acid degradation; L-histidine degradation into L-glutamate; N-formimidoyl-L-glutamate from L-histidine: step 3/3. Functionally, catalyzes the hydrolytic cleavage of the carbon-nitrogen bond in imidazolone-5-propanoate to yield N-formimidoyl-L-glutamate. It is the third step in the universal histidine degradation pathway. The polypeptide is Imidazolonepropionase (Verminephrobacter eiseniae (strain EF01-2)).